The chain runs to 2006 residues: E3 ubiquitin-protein ligase PRT6 (2006 aa).

A UBR-type zinc finger spans residues G119–G189. 2 disordered regions span residues L1167–V1186 and D1338–D1380. A compositionally biased stretch (basic and acidic residues) spans D1338–S1348. The span at E1349–Q1360 shows a compositional bias: polar residues. A compositionally biased stretch (basic and acidic residues) spans P1364–A1377. The RING-type; degenerate zinc finger occupies C1395–R1440.

Belongs to the E3 ubiquitin-protein ligase UBR1-like family.

It carries out the reaction S-ubiquitinyl-[E2 ubiquitin-conjugating enzyme]-L-cysteine + [acceptor protein]-L-lysine = [E2 ubiquitin-conjugating enzyme]-L-cysteine + N(6)-ubiquitinyl-[acceptor protein]-L-lysine.. It participates in protein modification; protein ubiquitination. Its function is as follows. Ubiquitin protein ligase which is a component of the N-end rule pathway with arginine specificity, and functions with the arginyltransferases ATE1 and ATE2. Recognizes and binds to proteins bearing specific N-terminal residues that are destabilizing according to the N-end rule, leading to their ubiquitination and subsequent degradation. Does not participate in degradation of proteins with N-terminal Phe or Leu. The N-end rule pathway regulates seed after-ripening, seedling sugar sensitivity, seedling lipid breakdown, and abscisic acid (ABA) sensitivity of germination. The N-end rule pathway regulates various aspects of leaf and shoot development. Involved in the ubiquitination and subsequent degradation of RAP2-12, an activator of hypoxic gene expression. The ubiquitination occurs after the N-arginylation of RAP2-12 by ATE1 or ATE2 under aerobic conditions. The end-rule pathway plays a role in regulating the timing and amplitude of the immune response following infection with the bacterial pathogen Pseudomonas syringae pv tomato. Regulates the biosynthesis of plant-defense metabolites such as glucosinolates, and the biosynthesis and response to the phytohormone jasmonate (JA), which plays a key role in plant immunity. Controls the expression of specific defense-response genes, activates the synthesis pathway for the phytoalexin camalexin, and influences basal resistance to the hemibiotroph pathogen Pseudomonas syringae pv tomato. Coordinates the mobilization of seed storage reserves and regulates the abundance and activities of several proteases following seed germination. In Arabidopsis thaliana (Mouse-ear cress), this protein is E3 ubiquitin-protein ligase PRT6.